Here is a 217-residue protein sequence, read N- to C-terminus: Adenylate kinase (217 aa).

Residue 10-15 (GAGKGT) coordinates ATP. Positions 30-59 (STGDMLRAAIREGTELGLKAKSVMESGGLV) are NMP. Residues Thr-31, Arg-36, 57 to 59 (GLV), 85 to 88 (GFPR), and Gln-92 each bind AMP. Residues 122 to 159 (GRRQHPASGRVYHVVYNPPKVEGKDDETGEDLVQRPDD) are LID. Residues Arg-123 and 132–133 (VY) contribute to the ATP site. AMP contacts are provided by Arg-156 and Arg-167. Position 202 (Arg-202) interacts with ATP.

The protein belongs to the adenylate kinase family. In terms of assembly, monomer.

The protein localises to the cytoplasm. The enzyme catalyses AMP + ATP = 2 ADP. The protein operates within purine metabolism; AMP biosynthesis via salvage pathway; AMP from ADP: step 1/1. Catalyzes the reversible transfer of the terminal phosphate group between ATP and AMP. Plays an important role in cellular energy homeostasis and in adenine nucleotide metabolism. This Acinetobacter baumannii (strain AB307-0294) protein is Adenylate kinase.